Consider the following 98-residue polypeptide: uncharacterized protein (98 aa).

The 55-residue stretch at 37-91 folds into the HTH cro/C1-type domain; it reads LITSRQQLGISQKQLETLSGVKQPMIARIEKGQTNPQLETLLKLLAPLGKTLSIV. The H-T-H motif DNA-binding region spans 48–67; the sequence is QKQLETLSGVKQPMIARIEK.

This is an uncharacterized protein from Haemophilus influenzae (strain ATCC 51907 / DSM 11121 / KW20 / Rd).